Reading from the N-terminus, the 379-residue chain is tRNA(Met) cytidine acetate ligase (379 aa).

ATP contacts are provided by residues 7–20, Gly100, Asn153, and Arg178; that span reads ITEY…HQYH.

Belongs to the TmcAL family.

The protein localises to the cytoplasm. The catalysed reaction is cytidine(34) in elongator tRNA(Met) + acetate + ATP = N(4)-acetylcytidine(34) in elongator tRNA(Met) + AMP + diphosphate. Its function is as follows. Catalyzes the formation of N(4)-acetylcytidine (ac(4)C) at the wobble position of elongator tRNA(Met), using acetate and ATP as substrates. First activates an acetate ion to form acetyladenylate (Ac-AMP) and then transfers the acetyl group to tRNA to form ac(4)C34. This is tRNA(Met) cytidine acetate ligase from Staphylococcus aureus (strain Mu3 / ATCC 700698).